The following is a 1275-amino-acid chain: Inner capsid protein lambda-1 (1275 aa).

A compositionally biased stretch (basic residues) spans 1 to 12 (MKRIPRKTKGKS). The tract at residues 1-149 (MKRIPRKTKG…DNEGGSNQKP (149 aa)) is disordered. 2 stretches are compositionally biased toward basic and acidic residues: residues 18–35 (DSTERADDGSSQLRDKQN) and 75–117 (NNDE…DKSK). The segment covering 118-149 (AQVTYSDTGINNANELSRSGNVDNEGGSNQKP) has biased composition (polar residues). The segment at 181–203 (YQCHVCSAVLFSPLDLDAHVASH) adopts a C2H2-type zinc-finger fold.

It belongs to the orthoreovirus lambda-1 protein family. In terms of assembly, homodecamer; each decamer is made up of two conformers of VP2, called VP2A and VP2B. 12 homodecamers assemble to form an icosahedral capsid. Interacts with protein mu-NS; in viral inclusions. Mg(2+) is required as a cofactor. It depends on Mn(2+) as a cofactor.

The protein localises to the virion. It catalyses the reaction ATP + H2O = ADP + phosphate + H(+). Inner capsid protein that self-assembles to form an icosahedral capsid with a T=2 symmetry, which consists of 120 copies of VP2, with channels at each of its five-fold vertices. This capsid constitutes the innermost concentric layer of the viral mature particle. Its function is as follows. Displays NTPase, RNA 5'-triphosphatase (RTPase) and RNA helicase activities. Helicase activity might be involved in unwinding or reannealing dsRNA during RNA synthesis. RTPase enzymatic activity represents the first step in RNA capping, which yields a 5'-diphosphorylated plus-strand RNA. This Reovirus type 3 (strain Dearing) (T3D) protein is Inner capsid protein lambda-1 (L3).